Here is a 338-residue protein sequence, read N- to C-terminus: Glyceraldehyde-3-phosphate dehydrogenase (338 aa).

NAD(+)-binding positions include 11-12 (TI) and Gly111. Residue 140–142 (SCN) coordinates D-glyceraldehyde 3-phosphate. Catalysis depends on Cys141, which acts as the Nucleophile. Arg169 serves as a coordination point for NAD(+). Residue 195–196 (HG) participates in D-glyceraldehyde 3-phosphate binding. Gln302 provides a ligand contact to NAD(+).

This sequence belongs to the glyceraldehyde-3-phosphate dehydrogenase family. In terms of assembly, homotetramer.

It is found in the cytoplasm. The catalysed reaction is D-glyceraldehyde 3-phosphate + phosphate + NADP(+) = (2R)-3-phospho-glyceroyl phosphate + NADPH + H(+). The enzyme catalyses D-glyceraldehyde 3-phosphate + phosphate + NAD(+) = (2R)-3-phospho-glyceroyl phosphate + NADH + H(+). Its pathway is carbohydrate degradation; glycolysis; pyruvate from D-glyceraldehyde 3-phosphate: step 1/5. In Methanobacterium formicicum, this protein is Glyceraldehyde-3-phosphate dehydrogenase (gap).